Reading from the N-terminus, the 222-residue chain is Probable nicotinate-nucleotide adenylyltransferase (222 aa).

It belongs to the NadD family.

It catalyses the reaction nicotinate beta-D-ribonucleotide + ATP + H(+) = deamido-NAD(+) + diphosphate. Its pathway is cofactor biosynthesis; NAD(+) biosynthesis; deamido-NAD(+) from nicotinate D-ribonucleotide: step 1/1. Catalyzes the reversible adenylation of nicotinate mononucleotide (NaMN) to nicotinic acid adenine dinucleotide (NaAD). This is Probable nicotinate-nucleotide adenylyltransferase from Xylella fastidiosa (strain M23).